A 173-amino-acid polypeptide reads, in one-letter code: NADH-ubiquinone oxidoreductase chain 6 (173 aa).

Transmembrane regions (helical) follow at residues 1 to 21 (MTYF…AVAS), 27 to 47 (YGVL…LSLG), 48 to 68 (VSFI…VVFV), 87 to 107 (VVIY…VGDF), and 139 to 159 (WGAG…FVVL).

This sequence belongs to the complex I subunit 6 family.

The protein localises to the mitochondrion membrane. It carries out the reaction a ubiquinone + NADH + 5 H(+)(in) = a ubiquinol + NAD(+) + 4 H(+)(out). Its function is as follows. Core subunit of the mitochondrial membrane respiratory chain NADH dehydrogenase (Complex I) that is believed to belong to the minimal assembly required for catalysis. Complex I functions in the transfer of electrons from NADH to the respiratory chain. The immediate electron acceptor for the enzyme is believed to be ubiquinone. The sequence is that of NADH-ubiquinone oxidoreductase chain 6 (MT-ND6) from Struthio camelus (Common ostrich).